The chain runs to 629 residues: tRNA uridine 5-carboxymethylaminomethyl modification enzyme MnmG (629 aa).

An FAD-binding site is contributed by 14–19 (GAGHAG). 274 to 288 (GPRYCPSIEDKVVRF) contributes to the NAD(+) binding site.

The protein belongs to the MnmG family. Homodimer. Heterotetramer of two MnmE and two MnmG subunits. The cofactor is FAD.

Its subcellular location is the cytoplasm. In terms of biological role, NAD-binding protein involved in the addition of a carboxymethylaminomethyl (cmnm) group at the wobble position (U34) of certain tRNAs, forming tRNA-cmnm(5)s(2)U34. In Xylella fastidiosa (strain Temecula1 / ATCC 700964), this protein is tRNA uridine 5-carboxymethylaminomethyl modification enzyme MnmG.